Here is a 183-residue protein sequence, read N- to C-terminus: Putative manganese efflux pump MntP 1 (183 aa).

Helical transmembrane passes span 6–26, 36–56, 64–84, 100–120, 130–150, and 158–178; these read LFLL…CIGI, MIFV…GGYI, IVPI…ILMI, IMYL…GFTT, LFMS…LGII, and ISII…LFGL.

The protein belongs to the MntP (TC 9.B.29) family.

The protein resides in the cell membrane. In terms of biological role, probably functions as a manganese efflux pump. The protein is Putative manganese efflux pump MntP 1 of Clostridium botulinum (strain Hall / ATCC 3502 / NCTC 13319 / Type A).